We begin with the raw amino-acid sequence, 399 residues long: Vitamin K-dependent protein Z (399 aa).

The first 22 residues, 1 to 22 (MAGCILLLRGFILTLILHQVEL), serve as a signal peptide directing secretion. A propeptide spanning residues 23-40 (SVFLPAPKANNVLRRWRR) is cleaved from the precursor. A Gla domain is found at 41-86 (GSSYFLEEIFQGNLEKECYEEVCNYEEAREVFENDVITDEFWRQYG). 11 positions are modified to 4-carboxyglutamate: E47, E48, E55, E57, E60, E61, E66, E67, E70, E73, and E80. A disulfide bridge links C58 with C63. 2 EGF-like domains span residues 87–123 (GGSP…KTCA) and 125–166 (AKNE…KSCG). 7 disulfide bridges follow: C91-C102, C96-C111, C113-C122, C129-C141, C137-C150, C152-C165, and C208-C224. N99 carries an N-linked (GlcNAc...) asparagine glycan. D104 is modified ((3R)-3-hydroxyaspartate). A Peptidase S1 domain is found at 172–399 (ACGALTSEHI…YSMWFKQIMK (228 aa)). 3 N-linked (GlcNAc...) asparagine glycosylation sites follow: N230, N305, and N331. Cysteines 326 and 340 form a disulfide.

This sequence belongs to the peptidase S1 family. The iron and 2-oxoglutarate dependent 3-hydroxylation of aspartate and asparagine is (R) stereospecific within EGF domains. As to expression, plasma.

The protein localises to the secreted. Its function is as follows. Appears to assist hemostasis by binding thrombin and promoting its association with phospholipid vesicles. Inhibits activity of the coagulation protease factor Xa in the presence of SERPINA10, calcium and phospholipids. This chain is Vitamin K-dependent protein Z (Proz), found in Mus musculus (Mouse).